The following is a 414-amino-acid chain: Probable sugar-binding periplasmic protein (414 aa).

The signal sequence occupies residues methionine 1 to alanine 22.

The protein belongs to the bacterial solute-binding protein 1 family.

It is found in the periplasm. Part of a binding-protein-dependent transport system for a sugar. The polypeptide is Probable sugar-binding periplasmic protein (Rhizobium meliloti (strain 1021) (Ensifer meliloti)).